The sequence spans 89 residues: Small ribosomal subunit protein uS15 (89 aa).

Belongs to the universal ribosomal protein uS15 family. In terms of assembly, part of the 30S ribosomal subunit. Forms a bridge to the 50S subunit in the 70S ribosome, contacting the 23S rRNA.

One of the primary rRNA binding proteins, it binds directly to 16S rRNA where it helps nucleate assembly of the platform of the 30S subunit by binding and bridging several RNA helices of the 16S rRNA. Its function is as follows. Forms an intersubunit bridge (bridge B4) with the 23S rRNA of the 50S subunit in the ribosome. This chain is Small ribosomal subunit protein uS15, found in Photorhabdus luminescens (Xenorhabdus luminescens).